Consider the following 228-residue polypeptide: Phosphoglycolate phosphatase (228 aa).

Asp-12 serves as the catalytic Nucleophile. 3 residues coordinate Mg(2+): Asp-12, Asp-14, and Asp-177.

This sequence belongs to the HAD-like hydrolase superfamily. CbbY/CbbZ/Gph/YieH family. Mg(2+) serves as cofactor.

The catalysed reaction is 2-phosphoglycolate + H2O = glycolate + phosphate. Its pathway is organic acid metabolism; glycolate biosynthesis; glycolate from 2-phosphoglycolate: step 1/1. Its function is as follows. Specifically catalyzes the dephosphorylation of 2-phosphoglycolate. Is involved in the dissimilation of the intracellular 2-phosphoglycolate formed during the DNA repair of 3'-phosphoglycolate ends, a major class of DNA lesions induced by oxidative stress. This Vibrio vulnificus (strain CMCP6) protein is Phosphoglycolate phosphatase.